The following is a 918-amino-acid chain: Serine/threonine-protein kinase D1 (918 aa).

Position 93 is a phosphotyrosine (tyrosine 93). The Phorbol-ester/DAG-type 1 zinc-finger motif lies at 144-194 (PHALFVHSYRAPAFCDHCGEMLWGLVRQGLKCEGCGLNYHKRCAFKIPNNC). Phosphoserine occurs at positions 203, 206, 217, and 221. The Phorbol-ester/DAG-type 2 zinc-finger motif lies at 276–326 (PHTFVIHSYTRPTVCQFCKKLLKGLFRQGLQCKDCRFNCHKRCAPKVPNNC). 2 disordered regions span residues 338–362 (SPGA…NSGL) and 379–410 (AEGQ…SNNI). Over residues 345–355 (VVMEEGSDDND) the composition is skewed to acidic residues. Position 351 is a phosphoserine (serine 351). Polar residues predominate over residues 400–410 (RTISPSTSNNI). Residues serine 403 and serine 407 each carry the phosphoserine; by MAPK13 modification. Positions 428–547 (TVMKEGWMVH…WEVAIQHALM (120 aa)) constitute a PH domain. Phosphotyrosine is present on tyrosine 438. Residue serine 454 is modified to Phosphoserine. At tyrosine 469 the chain carries Phosphotyrosine; by ABL. Phosphotyrosine is present on tyrosine 508. Serine 554 is subject to Phosphoserine. Positions 589–845 (IFPDEVLGSG…VDKTLSHPWL (257 aa)) constitute a Protein kinase domain. ATP-binding positions include 595–603 (LGSGQFGIV) and lysine 618. Aspartate 712 serves as the catalytic Proton acceptor. A Phosphoserine; by PKC/PRKCD modification is found at serine 744. A Phosphoserine; by autocatalysis and PKC/PRKCD modification is found at serine 748. At tyrosine 755 the chain carries Phosphotyrosine. Phosphoserine; by autocatalysis is present on serine 916.

The protein belongs to the protein kinase superfamily. CAMK Ser/Thr protein kinase family. PKD subfamily. As to quaternary structure, interacts (via N-terminus) with ADAP1/CENTA1. Interacts with MAPK13. Interacts with DAPK1 in an oxidative stress-regulated manner. Interacts with USP28; the interaction induces phosphorylation of USP28 and activated KRAS-mediated stabilization of ZNF304. Interacts with AKAP13 (via C-terminal domain). Mg(2+) serves as cofactor. Phosphorylated at Ser-403 and Ser-407 by MAPK13 during regulation of insulin secretion in pancreatic beta cells. Phosphorylated by DAPK1. Phosphorylated at Tyr-93 and by ABL at Tyr-469, which primes the kinase in response to oxidative stress, and promotes a second step activating phosphorylation at Ser-744/Ser-748 by PKRD. Phosphorylated at Ser-916 upon S.enterica infection in macrophages.

It is found in the cytoplasm. It localises to the cell membrane. The protein localises to the golgi apparatus. Its subcellular location is the trans-Golgi network. It carries out the reaction L-seryl-[protein] + ATP = O-phospho-L-seryl-[protein] + ADP + H(+). The enzyme catalyses L-threonyl-[protein] + ATP = O-phospho-L-threonyl-[protein] + ADP + H(+). Activated by DAG and phorbol esters. Phorbol-ester/DAG-type domain 1 binds DAG with high affinity and appears to play the dominant role in mediating translocation to the cell membrane and trans-Golgi network. Phorbol-ester/DAG-type domain 2 binds phorbol ester with higher affinity. Autophosphorylation of Ser-748 and phosphorylation of Ser-744 by PKC relieves auto-inhibition by the PH domain. Phosphorylation on Tyr-469 by the SRC-ABL1 pathway in response to oxidative stress, is also required for activation. Activated by DAPK1 under oxidative stress. Serine/threonine-protein kinase that converts transient diacylglycerol (DAG) signals into prolonged physiological effects downstream of PKC, and is involved in the regulation of MAPK8/JNK1 and Ras signaling, Golgi membrane integrity and trafficking, cell survival through NF-kappa-B activation, cell migration, cell differentiation by mediating HDAC7 nuclear export, cell proliferation via MAPK1/3 (ERK1/2) signaling, and plays a role in cardiac hypertrophy, VEGFA-induced angiogenesis, genotoxic-induced apoptosis and flagellin-stimulated inflammatory response. Phosphorylates the epidermal growth factor receptor (EGFR) on dual threonine residues, which leads to the suppression of epidermal growth factor (EGF)-induced MAPK8/JNK1 activation and subsequent JUN phosphorylation. Phosphorylates RIN1, inducing RIN1 binding to 14-3-3 proteins YWHAB, YWHAE and YWHAZ and increased competition with RAF1 for binding to GTP-bound form of Ras proteins (NRAS, HRAS and KRAS). Acts downstream of the heterotrimeric G-protein beta/gamma-subunit complex to maintain the structural integrity of the Golgi membranes, and is required for protein transport along the secretory pathway. In the trans-Golgi network (TGN), regulates the fission of transport vesicles that are on their way to the plasma membrane. May act by activating the lipid kinase phosphatidylinositol 4-kinase beta (PI4KB) at the TGN for the local synthesis of phosphorylated inositol lipids, which induces a sequential production of DAG, phosphatidic acid (PA) and lyso-PA (LPA) that are necessary for membrane fission and generation of specific transport carriers to the cell surface. Under oxidative stress, is phosphorylated at Tyr-469 via SRC-ABL1 and contributes to cell survival by activating IKK complex and subsequent nuclear translocation and activation of NFKB1. Involved in cell migration by regulating integrin alpha-5/beta-3 recycling and promoting its recruitment in newly forming focal adhesion. In osteoblast differentiation, mediates the bone morphogenetic protein 2 (BMP2)-induced nuclear export of HDAC7, which results in the inhibition of HDAC7 transcriptional repression of RUNX2. In neurons, plays an important role in neuronal polarity by regulating the biogenesis of TGN-derived dendritic vesicles, and is involved in the maintenance of dendritic arborization and Golgi structure in hippocampal cells. May potentiate mitogenesis induced by the neuropeptide bombesin or vasopressin by mediating an increase in the duration of MAPK1/3 (ERK1/2) signaling, which leads to accumulation of immediate-early gene products including FOS that stimulate cell cycle progression. Plays an important role in the proliferative response induced by low calcium in keratinocytes, through sustained activation of MAPK1/3 (ERK1/2) pathway. Downstream of novel PKC signaling, plays a role in cardiac hypertrophy by phosphorylating HDAC5, which in turn triggers XPO1/CRM1-dependent nuclear export of HDAC5, MEF2A transcriptional activation and induction of downstream target genes that promote myocyte hypertrophy and pathological cardiac remodeling. Mediates cardiac troponin I (TNNI3) phosphorylation at the PKA sites, which results in reduced myofilament calcium sensitivity, and accelerated crossbridge cycling kinetics. The PRKD1-HDAC5 pathway is also involved in angiogenesis by mediating VEGFA-induced specific subset of gene expression, cell migration, and tube formation. In response to VEGFA, is necessary and required for HDAC7 phosphorylation which induces HDAC7 nuclear export and endothelial cell proliferation and migration. During apoptosis induced by cytarabine and other genotoxic agents, PRKD1 is cleaved by caspase-3 at Asp-378, resulting in activation of its kinase function and increased sensitivity of cells to the cytotoxic effects of genotoxic agents. In epithelial cells, is required for transducing flagellin-stimulated inflammatory responses by binding and phosphorylating TLR5, which contributes to MAPK14/p38 activation and production of inflammatory cytokines. Acts as an activator of NLRP3 inflammasome assembly by mediating phosphorylation of NLRP3. May play a role in inflammatory response by mediating activation of NF-kappa-B. May be involved in pain transmission by directly modulating TRPV1 receptor. Plays a role in activated KRAS-mediated stabilization of ZNF304 in colorectal cancer (CRC) cells. Regulates nuclear translocation of transcription factor TFEB in macrophages upon live S.enterica infection. The chain is Serine/threonine-protein kinase D1 (Prkd1) from Mus musculus (Mouse).